Here is a 725-residue protein sequence, read N- to C-terminus: Eukaryotic translation initiation factor 3 subunit B (725 aa).

In terms of domain architecture, RRM spans 46-130 (NCVFIAGIPV…HTFTARSFKD (85 aa)). WD repeat units follow at residues 202 to 240 (RANW…RAHR), 242 to 280 (AHTN…SLRI), 354 to 395 (VNIE…SMQR), 462 to 504 (PLSE…HAPK), 510 to 552 (DAGV…AKRT), and 554 to 594 (VIEH…FTFQ).

Belongs to the eIF-3 subunit B family. In terms of assembly, component of the eukaryotic translation initiation factor 3 (eIF-3) complex.

Its subcellular location is the cytoplasm. Functionally, RNA-binding component of the eukaryotic translation initiation factor 3 (eIF-3) complex, which is involved in protein synthesis of a specialized repertoire of mRNAs and, together with other initiation factors, stimulates binding of mRNA and methionyl-tRNAi to the 40S ribosome. The eIF-3 complex specifically targets and initiates translation of a subset of mRNAs involved in cell proliferation. The sequence is that of Eukaryotic translation initiation factor 3 subunit B from Caenorhabditis elegans.